A 384-amino-acid polypeptide reads, in one-letter code: 1-deoxy-D-xylulose 5-phosphate reductoisomerase (384 aa).

Residues T10, G11, S12, I13, R37, N38, and N124 each contribute to the NADPH site. Position 125 (K125) interacts with 1-deoxy-D-xylulose 5-phosphate. Position 126 (E126) interacts with NADPH. Residue D150 coordinates Mn(2+). 4 residues coordinate 1-deoxy-D-xylulose 5-phosphate: S151, E152, S176, and H199. E152 contributes to the Mn(2+) binding site. G205 contacts NADPH. The 1-deoxy-D-xylulose 5-phosphate site is built by S212, N217, K218, and E221. A Mn(2+)-binding site is contributed by E221.

The protein belongs to the DXR family. Requires Mg(2+) as cofactor. Mn(2+) serves as cofactor.

The enzyme catalyses 2-C-methyl-D-erythritol 4-phosphate + NADP(+) = 1-deoxy-D-xylulose 5-phosphate + NADPH + H(+). The protein operates within isoprenoid biosynthesis; isopentenyl diphosphate biosynthesis via DXP pathway; isopentenyl diphosphate from 1-deoxy-D-xylulose 5-phosphate: step 1/6. Its function is as follows. Catalyzes the NADPH-dependent rearrangement and reduction of 1-deoxy-D-xylulose-5-phosphate (DXP) to 2-C-methyl-D-erythritol 4-phosphate (MEP). This is 1-deoxy-D-xylulose 5-phosphate reductoisomerase from Clostridium perfringens (strain 13 / Type A).